A 311-amino-acid polypeptide reads, in one-letter code: Pyrimidine-specific ribonucleoside hydrolase RihA (311 aa).

Residue histidine 240 is part of the active site.

Belongs to the IUNH family. RihA subfamily.

Hydrolyzes cytidine or uridine to ribose and cytosine or uracil, respectively. The polypeptide is Pyrimidine-specific ribonucleoside hydrolase RihA (Salmonella typhimurium (strain LT2 / SGSC1412 / ATCC 700720)).